A 284-amino-acid chain; its full sequence is Tropomyosin beta chain (284 aa).

The residue at position 1 (Met-1) is an N-acetylmethionine. Positions Met-1–Lys-65 are disordered. The stretch at Met-1–Leu-284 forms a coiled coil. 2 stretches are compositionally biased toward basic and acidic residues: residues Lys-12 to Glu-40 and Lys-51 to Lys-65. Residue Thr-53 is modified to Phosphothreonine. Ser-61 carries the post-translational modification Phosphoserine; by PIK3CG. At Thr-79 the chain carries Phosphothreonine. Position 87 is a phosphoserine (Ser-87). Thr-108 is modified (phosphothreonine). The disordered stretch occupies residues Glu-117–Lys-136. Residues Ser-158, Ser-206, and Ser-215 each carry the phosphoserine modification. Thr-252 carries the post-translational modification Phosphothreonine. Tyr-261 is subject to Phosphotyrosine. Position 271 is a phosphoserine (Ser-271). Thr-282 is subject to Phosphothreonine. Ser-283 carries the post-translational modification Phosphoserine.

The protein belongs to the tropomyosin family. In terms of assembly, homodimer. Heterodimer of an alpha (TPM1, TPM3 or TPM4) and a beta (TPM2) chain. In terms of processing, phosphorylated on Ser-61 by PIK3CG. Phosphorylation on Ser-61 is required for ADRB2 internalization. As to expression, present in primary breast cancer tissue, absent from normal breast tissue.

The protein resides in the cytoplasm. It localises to the cytoskeleton. Binds to actin filaments in muscle and non-muscle cells. Plays a central role, in association with the troponin complex, in the calcium dependent regulation of vertebrate striated muscle contraction. Smooth muscle contraction is regulated by interaction with caldesmon. In non-muscle cells is implicated in stabilizing cytoskeleton actin filaments. The non-muscle isoform may have a role in agonist-mediated receptor internalization. The polypeptide is Tropomyosin beta chain (TPM2) (Homo sapiens (Human)).